The chain runs to 153 residues: Aminoglycoside N(6')-acetyltransferase type 1 (153 aa).

The region spanning 6-153 (PTIRQATPAD…YFRMPLEPSA (148 aa)) is the N-acetyltransferase domain. The substrate site is built by Trp27, Tyr70, Glu83, Asp119, and Glu140.

As to quaternary structure, homodimer.

The catalysed reaction is kanamycin B + acetyl-CoA = N(6')-acetylkanamycin B + CoA + H(+). In terms of biological role, catalyzes the transfer of an acetyl group from acetyl-CoA to the 6'-amino group of aminoglycoside molecules conferring resistance to antibiotics containing the purpurosamine ring including amikacin, gentamicin, kanamycin B, tobramycin, netilmicin, and isepamicin. In Stenotrophomonas maltophilia (Pseudomonas maltophilia), this protein is Aminoglycoside N(6')-acetyltransferase type 1.